Consider the following 248-residue polypeptide: MLLIPAIDLKDGHCVRLKQGDMDQSTTFGEDPAAMARKWVDAGARRLHLVDLNGAFAGAPKNHAAIKAILKEVGDDLPVQLGGGIRDLDTIEKYIDGGLRYVIIGTAAVKNPGFLKDACSAFGGHIIVGLDAKDGKVATDGWSKLTGHEVVDLAKRFEDWGVESIVYTDIGRDGMLSGINIEATVKLAQALTIPVIASGGLAGMADIEQLCAVESEGVEGVICGRAIYSGDLDFAAAQARADELNGAA.

Asp-8 acts as the Proton acceptor in catalysis. Asp-131 (proton donor) is an active-site residue.

Belongs to the HisA/HisF family.

Its subcellular location is the cytoplasm. It catalyses the reaction 1-(5-phospho-beta-D-ribosyl)-5-[(5-phospho-beta-D-ribosylamino)methylideneamino]imidazole-4-carboxamide = 5-[(5-phospho-1-deoxy-D-ribulos-1-ylimino)methylamino]-1-(5-phospho-beta-D-ribosyl)imidazole-4-carboxamide. It functions in the pathway amino-acid biosynthesis; L-histidine biosynthesis; L-histidine from 5-phospho-alpha-D-ribose 1-diphosphate: step 4/9. In Paracidovorax citrulli (strain AAC00-1) (Acidovorax citrulli), this protein is 1-(5-phosphoribosyl)-5-[(5-phosphoribosylamino)methylideneamino] imidazole-4-carboxamide isomerase.